We begin with the raw amino-acid sequence, 429 residues long: Histidine--tRNA ligase (429 aa).

Belongs to the class-II aminoacyl-tRNA synthetase family. Homodimer.

It localises to the cytoplasm. It carries out the reaction tRNA(His) + L-histidine + ATP = L-histidyl-tRNA(His) + AMP + diphosphate + H(+). This Corynebacterium efficiens (strain DSM 44549 / YS-314 / AJ 12310 / JCM 11189 / NBRC 100395) protein is Histidine--tRNA ligase.